The following is a 429-amino-acid chain: Glutamate-1-semialdehyde 2,1-aminomutase (429 aa).

Position 267 is an N6-(pyridoxal phosphate)lysine (lysine 267).

It belongs to the class-III pyridoxal-phosphate-dependent aminotransferase family. HemL subfamily. Homodimer. Pyridoxal 5'-phosphate is required as a cofactor.

The protein resides in the cytoplasm. The catalysed reaction is (S)-4-amino-5-oxopentanoate = 5-aminolevulinate. The protein operates within porphyrin-containing compound metabolism; protoporphyrin-IX biosynthesis; 5-aminolevulinate from L-glutamyl-tRNA(Glu): step 2/2. In Xanthomonas campestris pv. campestris (strain 8004), this protein is Glutamate-1-semialdehyde 2,1-aminomutase.